The following is a 666-amino-acid chain: Protein translocase subunit SecA 2 (666 aa).

ATP-binding positions include Gln119, 137-141 (GEGKS), and Asp546.

It belongs to the SecA family. Monomer and homodimer. Part of the essential Sec protein translocation apparatus which comprises SecA, SecYEG and auxiliary proteins SecDF-YajC and YidC.

The protein resides in the cell inner membrane. The protein localises to the cytoplasm. It catalyses the reaction ATP + H2O + cellular proteinSide 1 = ADP + phosphate + cellular proteinSide 2.. Part of the Sec protein translocase complex. Interacts with the SecYEG preprotein conducting channel. Has a central role in coupling the hydrolysis of ATP to the transfer of proteins into and across the cell membrane, serving both as a receptor for the preprotein-SecB complex and as an ATP-driven molecular motor driving the stepwise translocation of polypeptide chains across the membrane. The chain is Protein translocase subunit SecA 2 from Nitrosospira multiformis (strain ATCC 25196 / NCIMB 11849 / C 71).